Consider the following 323-residue polypeptide: Lipoyl synthase (323 aa).

[4Fe-4S] cluster contacts are provided by cysteine 61, cysteine 66, cysteine 72, cysteine 87, cysteine 91, cysteine 94, and serine 303. Residues 73 to 292 (WTKKTATFLV…EQYGLSIGIP (220 aa)) enclose the Radical SAM core domain.

This sequence belongs to the radical SAM superfamily. Lipoyl synthase family. [4Fe-4S] cluster serves as cofactor.

The protein resides in the cytoplasm. It catalyses the reaction [[Fe-S] cluster scaffold protein carrying a second [4Fe-4S](2+) cluster] + N(6)-octanoyl-L-lysyl-[protein] + 2 oxidized [2Fe-2S]-[ferredoxin] + 2 S-adenosyl-L-methionine + 4 H(+) = [[Fe-S] cluster scaffold protein] + N(6)-[(R)-dihydrolipoyl]-L-lysyl-[protein] + 4 Fe(3+) + 2 hydrogen sulfide + 2 5'-deoxyadenosine + 2 L-methionine + 2 reduced [2Fe-2S]-[ferredoxin]. It functions in the pathway protein modification; protein lipoylation via endogenous pathway; protein N(6)-(lipoyl)lysine from octanoyl-[acyl-carrier-protein]: step 2/2. Functionally, catalyzes the radical-mediated insertion of two sulfur atoms into the C-6 and C-8 positions of the octanoyl moiety bound to the lipoyl domains of lipoate-dependent enzymes, thereby converting the octanoylated domains into lipoylated derivatives. In Protochlamydia amoebophila (strain UWE25), this protein is Lipoyl synthase.